Consider the following 318-residue polypeptide: Actin-related protein 2/3 complex subunit 2A (318 aa).

The segment at 297–318 is disordered; that stretch reads RSMNNKSFKRLGLNEVNHTNSK.

The protein belongs to the ARPC2 family. Component of the Arp2/3 complex composed of ARP2, ARP3, ARPC1/p41-ARC, ARPC2/p34-ARC, ARPC3/p21-ARC, ARPC4/p20-ARC and ARPC5/p16-ARC. Interacts with ARPC4. As to expression, expressed at low levels in all tissues with a relatively highest expression in inflorescences.

Its subcellular location is the cytoplasm. The protein resides in the cytoskeleton. The protein localises to the cell projection. In terms of biological role, functions as actin-binding component of the Arp2/3 complex which is involved in regulation of actin polymerization and together with an activating nucleation-promoting factor (NPF) mediates the formation of branched actin networks. Seems to contact the mother actin filament. Arp2/3 complex plays a critical role in the control of cell morphogenesis via the modulation of cell polarity development. This Arabidopsis thaliana (Mouse-ear cress) protein is Actin-related protein 2/3 complex subunit 2A (ARPC2A).